The following is a 187-amino-acid chain: Elongation factor P (187 aa).

It belongs to the elongation factor P family.

It is found in the cytoplasm. It participates in protein biosynthesis; polypeptide chain elongation. Involved in peptide bond synthesis. Stimulates efficient translation and peptide-bond synthesis on native or reconstituted 70S ribosomes in vitro. Probably functions indirectly by altering the affinity of the ribosome for aminoacyl-tRNA, thus increasing their reactivity as acceptors for peptidyl transferase. In Sphingopyxis alaskensis (strain DSM 13593 / LMG 18877 / RB2256) (Sphingomonas alaskensis), this protein is Elongation factor P.